The primary structure comprises 40 residues: MANTTGRIPLWLIGTVTGILVIGLLGIFFYGAYSGLGSSL.

A helical transmembrane segment spans residues 8-28; sequence IPLWLIGTVTGILVIGLLGIF.

The protein belongs to the PsbJ family. PSII is composed of 1 copy each of membrane proteins PsbA, PsbB, PsbC, PsbD, PsbE, PsbF, PsbH, PsbI, PsbJ, PsbK, PsbL, PsbM, PsbT, PsbX, PsbY, PsbZ, Psb30/Ycf12, at least 3 peripheral proteins of the oxygen-evolving complex and a large number of cofactors. It forms dimeric complexes.

Its subcellular location is the plastid. The protein resides in the chloroplast thylakoid membrane. Functionally, one of the components of the core complex of photosystem II (PSII). PSII is a light-driven water:plastoquinone oxidoreductase that uses light energy to abstract electrons from H(2)O, generating O(2) and a proton gradient subsequently used for ATP formation. It consists of a core antenna complex that captures photons, and an electron transfer chain that converts photonic excitation into a charge separation. The protein is Photosystem II reaction center protein J of Angiopteris evecta (Mule's foot fern).